The chain runs to 718 residues: Phenylalanine--tRNA ligase beta subunit (718 aa).

One can recognise a tRNA-binding domain in the interval 39-153; it reads LNEISGIKFG…IFDLESNPLK (115 aa). A B5 domain is found at 386–460; sequence SKKTFLDLNY…RFYGLEKLKD (75 aa). 3 residues coordinate Mg(2+): Asp438, Asp444, and Asp448.

This sequence belongs to the phenylalanyl-tRNA synthetase beta subunit family. Type 1 subfamily. Tetramer of two alpha and two beta subunits. Mg(2+) serves as cofactor.

The protein localises to the cytoplasm. The enzyme catalyses tRNA(Phe) + L-phenylalanine + ATP = L-phenylalanyl-tRNA(Phe) + AMP + diphosphate + H(+). The protein is Phenylalanine--tRNA ligase beta subunit of Mesomycoplasma hyopneumoniae (strain 232) (Mycoplasma hyopneumoniae).